The following is a 180-amino-acid chain: Protein GrpE (180 aa).

Positions 1–19 are enriched in basic and acidic residues; sequence MAEKKRAQEQEKVQEDQKM. Positions 1–25 are disordered; the sequence is MAEKKRAQEQEKVQEDQKMQNEQNE.

The protein belongs to the GrpE family. As to quaternary structure, homodimer.

It localises to the cytoplasm. Participates actively in the response to hyperosmotic and heat shock by preventing the aggregation of stress-denatured proteins, in association with DnaK and GrpE. It is the nucleotide exchange factor for DnaK and may function as a thermosensor. Unfolded proteins bind initially to DnaJ; upon interaction with the DnaJ-bound protein, DnaK hydrolyzes its bound ATP, resulting in the formation of a stable complex. GrpE releases ADP from DnaK; ATP binding to DnaK triggers the release of the substrate protein, thus completing the reaction cycle. Several rounds of ATP-dependent interactions between DnaJ, DnaK and GrpE are required for fully efficient folding. The protein is Protein GrpE of Nitratiruptor sp. (strain SB155-2).